The primary structure comprises 90 residues: Small ribosomal subunit protein uS15c (90 aa).

This sequence belongs to the universal ribosomal protein uS15 family. As to quaternary structure, part of the 30S ribosomal subunit.

The protein localises to the plastid. It is found in the chloroplast. This is Small ribosomal subunit protein uS15c (rps15-A) from Lolium perenne (Perennial ryegrass).